A 131-amino-acid chain; its full sequence is Small ribosomal subunit protein uS8 (131 aa).

This sequence belongs to the universal ribosomal protein uS8 family. Part of the 30S ribosomal subunit. Contacts proteins S5 and S12.

Functionally, one of the primary rRNA binding proteins, it binds directly to 16S rRNA central domain where it helps coordinate assembly of the platform of the 30S subunit. The sequence is that of Small ribosomal subunit protein uS8 from Azoarcus sp. (strain BH72).